Here is a 214-residue protein sequence, read N- to C-terminus: Octanoyltransferase (214 aa).

Residues 28–210 (GTAEDALYLL…EFGKVFTDTA (183 aa)) form the BPL/LPL catalytic domain. Substrate contacts are provided by residues 73–80 (RGGNITCH), 140–142 (SIG), and 153–155 (GLS). Cys171 (acyl-thioester intermediate) is an active-site residue.

Belongs to the LipB family.

The protein localises to the cytoplasm. It catalyses the reaction octanoyl-[ACP] + L-lysyl-[protein] = N(6)-octanoyl-L-lysyl-[protein] + holo-[ACP] + H(+). Its pathway is protein modification; protein lipoylation via endogenous pathway; protein N(6)-(lipoyl)lysine from octanoyl-[acyl-carrier-protein]: step 1/2. Catalyzes the transfer of endogenously produced octanoic acid from octanoyl-acyl-carrier-protein onto the lipoyl domains of lipoate-dependent enzymes. Lipoyl-ACP can also act as a substrate although octanoyl-ACP is likely to be the physiological substrate. This is Octanoyltransferase from Maridesulfovibrio salexigens (strain ATCC 14822 / DSM 2638 / NCIMB 8403 / VKM B-1763) (Desulfovibrio salexigens).